A 154-amino-acid polypeptide reads, in one-letter code: Ribonuclease H (154 aa).

Residues 3–144 (ELPVVTIYTD…ADQLARDGIV (142 aa)) enclose the RNase H type-1 domain. The Mg(2+) site is built by D12, E50, D72, and D136.

Belongs to the RNase H family. As to quaternary structure, monomer. The cofactor is Mg(2+).

The protein localises to the cytoplasm. It catalyses the reaction Endonucleolytic cleavage to 5'-phosphomonoester.. Endonuclease that specifically degrades the RNA of RNA-DNA hybrids. The polypeptide is Ribonuclease H (Bradyrhizobium diazoefficiens (strain JCM 10833 / BCRC 13528 / IAM 13628 / NBRC 14792 / USDA 110)).